The primary structure comprises 449 residues: Exodeoxyribonuclease 7 large subunit (449 aa).

This sequence belongs to the XseA family. As to quaternary structure, heterooligomer composed of large and small subunits.

It is found in the cytoplasm. The enzyme catalyses Exonucleolytic cleavage in either 5'- to 3'- or 3'- to 5'-direction to yield nucleoside 5'-phosphates.. Functionally, bidirectionally degrades single-stranded DNA into large acid-insoluble oligonucleotides, which are then degraded further into small acid-soluble oligonucleotides. In Salmonella heidelberg (strain SL476), this protein is Exodeoxyribonuclease 7 large subunit.